A 118-amino-acid chain; its full sequence is Large ribosomal subunit protein bL20 (118 aa).

Belongs to the bacterial ribosomal protein bL20 family.

Its function is as follows. Binds directly to 23S ribosomal RNA and is necessary for the in vitro assembly process of the 50S ribosomal subunit. It is not involved in the protein synthesizing functions of that subunit. In Bacillus anthracis (strain CDC 684 / NRRL 3495), this protein is Large ribosomal subunit protein bL20.